Here is a 367-residue protein sequence, read N- to C-terminus: tRNA/tmRNA (uracil-C(5))-methyltransferase (367 aa).

The S-adenosyl-L-methionine site is built by Gln-190, Tyr-218, Asn-223, Glu-239, and Asp-299. Catalysis depends on Cys-324, which acts as the Nucleophile. Catalysis depends on Glu-358, which acts as the Proton acceptor.

The protein belongs to the class I-like SAM-binding methyltransferase superfamily. RNA M5U methyltransferase family. TrmA subfamily.

It catalyses the reaction uridine(54) in tRNA + S-adenosyl-L-methionine = 5-methyluridine(54) in tRNA + S-adenosyl-L-homocysteine + H(+). The enzyme catalyses uridine(341) in tmRNA + S-adenosyl-L-methionine = 5-methyluridine(341) in tmRNA + S-adenosyl-L-homocysteine + H(+). Functionally, dual-specificity methyltransferase that catalyzes the formation of 5-methyluridine at position 54 (m5U54) in all tRNAs, and that of position 341 (m5U341) in tmRNA (transfer-mRNA). The sequence is that of tRNA/tmRNA (uracil-C(5))-methyltransferase from Pectobacterium carotovorum subsp. carotovorum (strain PC1).